The chain runs to 523 residues: uncharacterized protein (523 aa).

Residues 1-63 constitute a chloroplast transit peptide; sequence MACVSTCLIL…NRHGIAVVKA (63 aa). A run of 3 helical transmembrane segments spans residues 180–200, 386–406, and 423–443; these read VSFG…IIAL, ALVI…NTLL, and IYPL…IRWF.

It is found in the plastid. The protein resides in the chloroplast membrane. This is an uncharacterized protein from Arabidopsis thaliana (Mouse-ear cress).